The sequence spans 239 residues: Phosphoribosylaminoimidazole-succinocarboxamide synthase (239 aa).

It belongs to the SAICAR synthetase family.

The enzyme catalyses 5-amino-1-(5-phospho-D-ribosyl)imidazole-4-carboxylate + L-aspartate + ATP = (2S)-2-[5-amino-1-(5-phospho-beta-D-ribosyl)imidazole-4-carboxamido]succinate + ADP + phosphate + 2 H(+). Its pathway is purine metabolism; IMP biosynthesis via de novo pathway; 5-amino-1-(5-phospho-D-ribosyl)imidazole-4-carboxamide from 5-amino-1-(5-phospho-D-ribosyl)imidazole-4-carboxylate: step 1/2. This Bacillus cereus (strain B4264) protein is Phosphoribosylaminoimidazole-succinocarboxamide synthase.